Here is a 207-residue protein sequence, read N- to C-terminus: Large ribosomal subunit protein uL4 (207 aa).

The interval 55-75 (SAVRGGGRKPWRQKGTGRARQ) is disordered. A compositionally biased stretch (basic residues) spans 60–71 (GGRKPWRQKGTG).

It belongs to the universal ribosomal protein uL4 family. Part of the 50S ribosomal subunit.

Its function is as follows. One of the primary rRNA binding proteins, this protein initially binds near the 5'-end of the 23S rRNA. It is important during the early stages of 50S assembly. It makes multiple contacts with different domains of the 23S rRNA in the assembled 50S subunit and ribosome. Forms part of the polypeptide exit tunnel. This Staphylococcus epidermidis (strain ATCC 35984 / DSM 28319 / BCRC 17069 / CCUG 31568 / BM 3577 / RP62A) protein is Large ribosomal subunit protein uL4.